The sequence spans 280 residues: Band 7 protein AGAP004871 (280 aa).

Residues 23-43 form a helical membrane-spanning segment; sequence ILIFLSWVLVVLTMPFSLLVC.

Belongs to the band 7/mec-2 family.

The protein localises to the membrane. This chain is Band 7 protein AGAP004871, found in Anopheles gambiae (African malaria mosquito).